Consider the following 224-residue polypeptide: 7-cyano-7-deazaguanine synthase (224 aa).

An ATP-binding site is contributed by 12–22; sequence LSGGLDSSTVT. Residues Cys-193, Cys-201, Cys-204, and Cys-207 each coordinate Zn(2+).

It belongs to the QueC family. The cofactor is Zn(2+).

It catalyses the reaction 7-carboxy-7-deazaguanine + NH4(+) + ATP = 7-cyano-7-deazaguanine + ADP + phosphate + H2O + H(+). It participates in purine metabolism; 7-cyano-7-deazaguanine biosynthesis. Catalyzes the ATP-dependent conversion of 7-carboxy-7-deazaguanine (CDG) to 7-cyano-7-deazaguanine (preQ(0)). In Prochlorococcus marinus subsp. pastoris (strain CCMP1986 / NIES-2087 / MED4), this protein is 7-cyano-7-deazaguanine synthase.